The sequence spans 371 residues: Anhydro-N-acetylmuramic acid kinase (371 aa).

12–20 (GTVLDGNID) contacts ATP.

Belongs to the anhydro-N-acetylmuramic acid kinase family.

It catalyses the reaction 1,6-anhydro-N-acetyl-beta-muramate + ATP + H2O = N-acetyl-D-muramate 6-phosphate + ADP + H(+). Its pathway is amino-sugar metabolism; 1,6-anhydro-N-acetylmuramate degradation. It participates in cell wall biogenesis; peptidoglycan recycling. In terms of biological role, catalyzes the specific phosphorylation of 1,6-anhydro-N-acetylmuramic acid (anhMurNAc) with the simultaneous cleavage of the 1,6-anhydro ring, generating MurNAc-6-P. Is required for the utilization of anhMurNAc either imported from the medium or derived from its own cell wall murein, and thus plays a role in cell wall recycling. The polypeptide is Anhydro-N-acetylmuramic acid kinase (Rhizobium rhizogenes (strain K84 / ATCC BAA-868) (Agrobacterium radiobacter)).